The following is a 122-amino-acid chain: MADNMTTTQIEWRMKKMAIGSSTHSSSVLMKDIQSQFEQLKLRWESYPNLVKSTDYHQKRETIRLATEELYLLSKRIDDSILFHKTVIANSSIIADMIVSLSLLETLYEMKDVVEVYSRQCL.

Short sequence motifs (nuclear export signal) lie at residues 10–19 and 86–95; these read IEWRMKKMAI and TVIANSSIIA.

This sequence belongs to the influenza viruses NEP family. Interacts with protein M1. May interact with host nucleoporin RAB/HRB and exportin XPO1/CRM1.

The protein localises to the virion. It localises to the host nucleus. Functionally, mediates the nuclear export of encapsidated genomic RNAs (ribonucleoproteins, RNPs). Acts as an adapter between viral RNPs complexes and the nuclear export machinery of the cell. Possesses no intrinsic RNA-binding activity, but includes a C-terminal M1-binding domain. This domain is believed to allow recognition of RNPs bound to the protein M1. Since protein M1 is not available in large quantities before late stages of infection, such an indirect recognition mechanism probably ensures that genomic RNPs are not exported from the host nucleus until sufficient quantities of viral mRNA and progeny genomic RNA have been synthesized. Furthermore, the RNPs enter the host cytoplasm only when associated with the M1 protein that is necessary to guide them to the plasma membrane. May down-regulate viral RNA synthesis when overproduced. The protein is Nuclear export protein of Homo sapiens (Human).